Reading from the N-terminus, the 303-residue chain is Probable cell division protein WhiA (303 aa).

A DNA-binding region (H-T-H motif) is located at residues 272-303 (SIQQVADALEFPITKSGVNHRLRKINKIADDL).

The protein belongs to the WhiA family.

In terms of biological role, involved in cell division and chromosome segregation. The chain is Probable cell division protein WhiA from Streptococcus pyogenes serotype M3 (strain ATCC BAA-595 / MGAS315).